The following is a 56-amino-acid chain: Large ribosomal subunit protein bL33 (56 aa).

The segment covering 1–12 has biased composition (basic and acidic residues); it reads MASKGGREKIKL. The tract at residues 1-27 is disordered; that stretch reads MASKGGREKIKLESTAGTGHFYTTNKN.

This sequence belongs to the bacterial ribosomal protein bL33 family.

This chain is Large ribosomal subunit protein bL33, found in Leptothrix cholodnii (strain ATCC 51168 / LMG 8142 / SP-6) (Leptothrix discophora (strain SP-6)).